Consider the following 159-residue polypeptide: SsrA-binding protein (159 aa).

This sequence belongs to the SmpB family.

The protein localises to the cytoplasm. Functionally, required for rescue of stalled ribosomes mediated by trans-translation. Binds to transfer-messenger RNA (tmRNA), required for stable association of tmRNA with ribosomes. tmRNA and SmpB together mimic tRNA shape, replacing the anticodon stem-loop with SmpB. tmRNA is encoded by the ssrA gene; the 2 termini fold to resemble tRNA(Ala) and it encodes a 'tag peptide', a short internal open reading frame. During trans-translation Ala-aminoacylated tmRNA acts like a tRNA, entering the A-site of stalled ribosomes, displacing the stalled mRNA. The ribosome then switches to translate the ORF on the tmRNA; the nascent peptide is terminated with the 'tag peptide' encoded by the tmRNA and targeted for degradation. The ribosome is freed to recommence translation, which seems to be the essential function of trans-translation. This chain is SsrA-binding protein, found in Idiomarina loihiensis (strain ATCC BAA-735 / DSM 15497 / L2-TR).